A 114-amino-acid chain; its full sequence is uncharacterized protein (114 aa).

The protein to M.kandleri MK0008.

This is an uncharacterized protein from Methanocaldococcus jannaschii (strain ATCC 43067 / DSM 2661 / JAL-1 / JCM 10045 / NBRC 100440) (Methanococcus jannaschii).